Reading from the N-terminus, the 252-residue chain is Imidazole glycerol phosphate synthase subunit HisF (252 aa).

Catalysis depends on residues D13 and D132.

The protein belongs to the HisA/HisF family. Heterodimer of HisH and HisF.

It localises to the cytoplasm. The enzyme catalyses 5-[(5-phospho-1-deoxy-D-ribulos-1-ylimino)methylamino]-1-(5-phospho-beta-D-ribosyl)imidazole-4-carboxamide + L-glutamine = D-erythro-1-(imidazol-4-yl)glycerol 3-phosphate + 5-amino-1-(5-phospho-beta-D-ribosyl)imidazole-4-carboxamide + L-glutamate + H(+). It participates in amino-acid biosynthesis; L-histidine biosynthesis; L-histidine from 5-phospho-alpha-D-ribose 1-diphosphate: step 5/9. In terms of biological role, IGPS catalyzes the conversion of PRFAR and glutamine to IGP, AICAR and glutamate. The HisF subunit catalyzes the cyclization activity that produces IGP and AICAR from PRFAR using the ammonia provided by the HisH subunit. This is Imidazole glycerol phosphate synthase subunit HisF from Campylobacter hominis (strain ATCC BAA-381 / DSM 21671 / CCUG 45161 / LMG 19568 / NCTC 13146 / CH001A).